A 182-amino-acid polypeptide reads, in one-letter code: MDTIALFGGSFDPPHIGHEAIIEALKKFKDIDKIIIMPTFLNPFKSNFYAPSSLRVKWLREIFKEEKRVEVSDYEVLQNRQVPTIETAKHLLESYKKIYLVIGADNLAKLRDWNSYDELKELVTFVVATRDDIEIPDEFIMLSVDEKISSTQLRENIQLSKLPKKCAKEIYDFYKEEHCKTE.

The protein belongs to the NadD family.

It catalyses the reaction nicotinate beta-D-ribonucleotide + ATP + H(+) = deamido-NAD(+) + diphosphate. It functions in the pathway cofactor biosynthesis; NAD(+) biosynthesis; deamido-NAD(+) from nicotinate D-ribonucleotide: step 1/1. Catalyzes the reversible adenylation of nicotinate mononucleotide (NaMN) to nicotinic acid adenine dinucleotide (NaAD). The protein is Probable nicotinate-nucleotide adenylyltransferase of Sulfurimonas denitrificans (strain ATCC 33889 / DSM 1251) (Thiomicrospira denitrificans (strain ATCC 33889 / DSM 1251)).